Reading from the N-terminus, the 314-residue chain is MKLLIIKIDTSYEVEDALGVFATDNLKALGIESRKRSDFEQAGWLHDSTVVEMDDIKDLPKDTYFYAYFDEEADKDELVEKFQAKLEELKSYGLNTGEGKITTSYIEDQDWNTAWQKYYHVIDFSRHLAIVPEWEDYQPAFSDQQLIKLDPGLAFGTGNHKTTQLAMMGIERAMVKPMSVVDVGTGSGILAIAASKLGATNVLATDISDESMTAAKQNSALNNLTNIKVQKTSLLAGVEGKFDIIVANILAEILLDLIPQMDAHLNKDGQVIFSGIDYLQLPKIKKSLDENNFKIDLTMKQGRWIGLAITRKEK.

S-adenosyl-L-methionine contacts are provided by threonine 163, glycine 184, aspartate 206, and asparagine 248.

Belongs to the methyltransferase superfamily. PrmA family.

The protein localises to the cytoplasm. The catalysed reaction is L-lysyl-[protein] + 3 S-adenosyl-L-methionine = N(6),N(6),N(6)-trimethyl-L-lysyl-[protein] + 3 S-adenosyl-L-homocysteine + 3 H(+). Functionally, methylates ribosomal protein L11. The sequence is that of Ribosomal protein L11 methyltransferase from Lactobacillus acidophilus (strain ATCC 700396 / NCK56 / N2 / NCFM).